Here is a 398-residue protein sequence, read N- to C-terminus: Tyrosine--tRNA ligase (398 aa).

Positions proline 42–histidine 51 match the 'HIGH' region motif. The 'KMSKS' region motif lies at lysine 226–serine 230. Lysine 229 provides a ligand contact to ATP. The region spanning alanine 341 to valine 397 is the S4 RNA-binding domain.

It belongs to the class-I aminoacyl-tRNA synthetase family. TyrS type 2 subfamily. In terms of assembly, homodimer.

Its subcellular location is the cytoplasm. It catalyses the reaction tRNA(Tyr) + L-tyrosine + ATP = L-tyrosyl-tRNA(Tyr) + AMP + diphosphate + H(+). In terms of biological role, catalyzes the attachment of tyrosine to tRNA(Tyr) in a two-step reaction: tyrosine is first activated by ATP to form Tyr-AMP and then transferred to the acceptor end of tRNA(Tyr). The chain is Tyrosine--tRNA ligase from Nitratidesulfovibrio vulgaris (strain ATCC 29579 / DSM 644 / CCUG 34227 / NCIMB 8303 / VKM B-1760 / Hildenborough) (Desulfovibrio vulgaris).